The following is a 408-amino-acid chain: Phosphoglycerate kinase (408 aa).

Substrate contacts are provided by residues 24–26, Arg39, 62–65, Arg121, and Arg161; these read DLN and HLGR. ATP-binding positions include Lys211, Gly307, Glu338, and 364–367; that span reads GGDS.

The protein belongs to the phosphoglycerate kinase family. In terms of assembly, monomer.

Its subcellular location is the cytoplasm. The catalysed reaction is (2R)-3-phosphoglycerate + ATP = (2R)-3-phospho-glyceroyl phosphate + ADP. The protein operates within carbohydrate degradation; glycolysis; pyruvate from D-glyceraldehyde 3-phosphate: step 2/5. The protein is Phosphoglycerate kinase of Paenarthrobacter aurescens (strain TC1).